The primary structure comprises 432 residues: Neuronal pentraxin-1 (432 aa).

The signal sequence occupies residues 1–22 (MPAGRAARTCALLALCLLGAGA). The tract at residues 90–122 (ESQSTLDPGAGEARAGGGRKQPGSGKNTMGDLS) is disordered. N-linked (GlcNAc...) asparagine glycans are attached at residues asparagine 154 and asparagine 193. The Pentraxin (PTX) domain occupies 226–428 (DKFQLTFPLR…GATKWTFEAC (203 aa)). An intrachain disulfide couples cysteine 256 to cysteine 316. Positions 280, 358, 359, 360, and 370 each coordinate Ca(2+).

In terms of assembly, homooligomer or heterooligomer (probably pentamer) with neuronal pentraxin receptor (NPTXR). Requires Ca(2+) as cofactor.

The protein localises to the secreted. Its subcellular location is the cytoplasmic vesicle. The protein resides in the secretory vesicle. It localises to the endoplasmic reticulum. Functionally, may be involved in mediating uptake of synaptic material during synapse remodeling or in mediating the synaptic clustering of AMPA glutamate receptors at a subset of excitatory synapses. In Homo sapiens (Human), this protein is Neuronal pentraxin-1 (NPTX1).